A 563-amino-acid polypeptide reads, in one-letter code: Benzaldehyde lyase (563 aa).

This sequence belongs to the TPP enzyme family. A metal cation serves as cofactor. The cofactor is thiamine diphosphate.

It catalyses the reaction benzoin = 2 benzaldehyde. In terms of biological role, cleavage of benzoin-anisoin acyloin linkage. The chain is Benzaldehyde lyase (bznB) from Pseudomonas fluorescens.